Here is a 1033-residue protein sequence, read N- to C-terminus: Isoleucine--tRNA ligase 2 (1033 aa).

Residues 47–57 carry the 'HIGH' region motif; it reads PTANGLPHVGH. A 'KMSKS' region motif is present at residues 590-594; it reads KMSKS. Lys593 contacts ATP.

The protein belongs to the class-I aminoacyl-tRNA synthetase family. IleS type 2 subfamily. As to quaternary structure, monomer. Zn(2+) serves as cofactor.

The protein resides in the cytoplasm. The enzyme catalyses tRNA(Ile) + L-isoleucine + ATP = L-isoleucyl-tRNA(Ile) + AMP + diphosphate. Functionally, catalyzes the attachment of isoleucine to tRNA(Ile). As IleRS can inadvertently accommodate and process structurally similar amino acids such as valine, to avoid such errors it has two additional distinct tRNA(Ile)-dependent editing activities. One activity is designated as 'pretransfer' editing and involves the hydrolysis of activated Val-AMP. The other activity is designated 'posttransfer' editing and involves deacylation of mischarged Val-tRNA(Ile). The protein is Isoleucine--tRNA ligase 2 of Bacillus thuringiensis subsp. konkukian (strain 97-27).